The chain runs to 102 residues: Large ribosomal subunit protein bL21 (102 aa).

It belongs to the bacterial ribosomal protein bL21 family. Part of the 50S ribosomal subunit. Contacts protein L20.

Functionally, this protein binds to 23S rRNA in the presence of protein L20. The chain is Large ribosomal subunit protein bL21 from Azorhizobium caulinodans (strain ATCC 43989 / DSM 5975 / JCM 20966 / LMG 6465 / NBRC 14845 / NCIMB 13405 / ORS 571).